A 185-amino-acid polypeptide reads, in one-letter code: Ribosome-recycling factor (185 aa).

It belongs to the RRF family.

Its subcellular location is the cytoplasm. In terms of biological role, responsible for the release of ribosomes from messenger RNA at the termination of protein biosynthesis. May increase the efficiency of translation by recycling ribosomes from one round of translation to another. In Acidothermus cellulolyticus (strain ATCC 43068 / DSM 8971 / 11B), this protein is Ribosome-recycling factor.